Here is a 132-residue protein sequence, read N- to C-terminus: Antileukoproteinase (132 aa).

Positions 1–25 (MKSSGLFPFLVLLALGTLAPWAVEG) are cleaved as a signal peptide. WAP domains follow at residues 28–76 (KSFK…LDPV) and 82–130 (TRRK…VSPV). Cystine bridges form between Cys35/Cys64, Cys43/Cys68, Cys51/Cys63, Cys57/Cys72, Cys89/Cys118, Cys96/Cys122, Cys105/Cys117, and Cys111/Cys126. Positions 84–132 (RKPGKCPVTYGQCLMLNPPNFCEMDGQCKRDLKCCMGMCGKSCVSPVKA) are elastase inhibitory domain.

In terms of assembly, interacts with GRN; interaction protects progranulin from proteolysis. As to expression, detected in blood plasma. Detected in bone marrow myeloid cells. Detected in airway sputum. Detected in parotid gland secretions. Detected in seminal plasma (at protein level). Detected in uterus cervix.

Its subcellular location is the secreted. Functionally, acid-stable proteinase inhibitor with strong affinities for trypsin, chymotrypsin, elastase, and cathepsin G. Modulates the inflammatory and immune responses after bacterial infection, and after infection by the intracellular parasite L.major. Down-regulates responses to bacterial lipopolysaccharide (LPS). Plays a role in regulating the activation of NF-kappa-B and inflammatory responses. Has antimicrobial activity against mycobacteria, but not against salmonella. Contributes to normal resistance against infection by M.tuberculosis. Required for normal resistance to infection by L.major. Required for normal wound healing, probably by preventing tissue damage by limiting protease activity. Together with ELANE, required for normal differentiation and proliferation of bone marrow myeloid cells. This Homo sapiens (Human) protein is Antileukoproteinase (SLPI).